We begin with the raw amino-acid sequence, 138 residues long: Large ribosomal subunit protein uL16 (138 aa).

Residues 1 to 17 are compositionally biased toward basic residues; that stretch reads MLIPRKVKHRKQHHPRQ. The interval 1-24 is disordered; the sequence is MLIPRKVKHRKQHHPRQRGIASGG.

This sequence belongs to the universal ribosomal protein uL16 family. Part of the 50S ribosomal subunit.

Functionally, binds 23S rRNA and is also seen to make contacts with the A and possibly P site tRNAs. The sequence is that of Large ribosomal subunit protein uL16 from Mycobacterium ulcerans (strain Agy99).